Consider the following 142-residue polypeptide: Ribosome-binding factor A (142 aa).

Belongs to the RbfA family. As to quaternary structure, monomer. Binds 30S ribosomal subunits, but not 50S ribosomal subunits or 70S ribosomes.

It localises to the cytoplasm. Functionally, one of several proteins that assist in the late maturation steps of the functional core of the 30S ribosomal subunit. Associates with free 30S ribosomal subunits (but not with 30S subunits that are part of 70S ribosomes or polysomes). Required for efficient processing of 16S rRNA. May interact with the 5'-terminal helix region of 16S rRNA. The sequence is that of Ribosome-binding factor A from Leifsonia xyli subsp. xyli (strain CTCB07).